The chain runs to 346 residues: GPALPP motifs-containing protein 1 (346 aa).

Disordered regions lie at residues 1–283 (MARD…ESLM) and 289–308 (KLKSKAAEDKNKHQERIPFD). Ala-2 bears the N-acetylalanine mark. The short motif at 7 to 12 (GPALPP) is the GPALPP motif 1 element. The residue at position 28 (Ser-28) is a Phosphoserine. Residues 32 to 37 (GPALPP) carry the GPALPP motif 2 motif. The segment covering 60-69 (GNQESEEEDT) has biased composition (acidic residues). The GPALPP motif 3 signature appears at 91–96 (GPALPP). Ser-104 bears the Phosphoserine mark. Over residues 106–115 (PRPIIGPALP) the composition is skewed to pro residues. The GPALPP motif 4 motif lies at 111-116 (GPALPP). Over residues 123 to 132 (QKNDKGREDP) the composition is skewed to basic and acidic residues. Residues Ser-136, Ser-141, and Ser-146 each carry the phosphoserine modification. The span at 142–152 (EEAESGEDEDI) shows a compositional bias: acidic residues. Basic and acidic residues-rich tracts occupy residues 169–193 (EFEKRAQRMKEKLTKGDDDSSKPIT) and 233–267 (PADRERKAKEIQEARKSFSKKDEENILSGRDKRLA). Lys-277 participates in a covalent cross-link: Glycyl lysine isopeptide (Lys-Gly) (interchain with G-Cter in SUMO2). A compositionally biased stretch (basic and acidic residues) spans 293-308 (KAAEDKNKHQERIPFD). A Glycyl lysine isopeptide (Lys-Gly) (interchain with G-Cter in SUMO2) cross-link involves residue Lys-314.

The protein is GPALPP motifs-containing protein 1 (Gpalpp1) of Mus musculus (Mouse).